Consider the following 143-residue polypeptide: Antiholin-like protein LrgA (143 aa).

A run of 4 helical transmembrane segments spans residues 6-26, 30-50, 61-81, and 97-117; these read VYSF…SNII, LPIP…LLCL, LGTA…ISVI, and VIVV…QFIL.

It belongs to the CidA/LrgA family. LrgA subfamily.

Its subcellular location is the cell membrane. In terms of biological role, inhibits the expression or activity of extracellular murein hydrolases by interacting, possibly with LrgB, with the holin-like protein CidA. The LrgAB and CidA proteins may affect the proton motive force of the membrane. May be involved in programmed cell death (PCD), possibly triggering PCD in response to antibiotics and environmental stresses. The sequence is that of Antiholin-like protein LrgA from Bacillus cereus (strain AH820).